A 212-amino-acid chain; its full sequence is Imidazole glycerol phosphate synthase subunit HisH (212 aa).

The Glutamine amidotransferase type-1 domain occupies 3 to 212 (TVAVIDYGMG…QNFAAWDGRW (210 aa)). The Nucleophile role is filled by Cys-81. Residues His-190 and Glu-192 contribute to the active site.

Heterodimer of HisH and HisF.

Its subcellular location is the cytoplasm. It catalyses the reaction 5-[(5-phospho-1-deoxy-D-ribulos-1-ylimino)methylamino]-1-(5-phospho-beta-D-ribosyl)imidazole-4-carboxamide + L-glutamine = D-erythro-1-(imidazol-4-yl)glycerol 3-phosphate + 5-amino-1-(5-phospho-beta-D-ribosyl)imidazole-4-carboxamide + L-glutamate + H(+). The catalysed reaction is L-glutamine + H2O = L-glutamate + NH4(+). Its pathway is amino-acid biosynthesis; L-histidine biosynthesis; L-histidine from 5-phospho-alpha-D-ribose 1-diphosphate: step 5/9. Functionally, IGPS catalyzes the conversion of PRFAR and glutamine to IGP, AICAR and glutamate. The HisH subunit catalyzes the hydrolysis of glutamine to glutamate and ammonia as part of the synthesis of IGP and AICAR. The resulting ammonia molecule is channeled to the active site of HisF. The sequence is that of Imidazole glycerol phosphate synthase subunit HisH from Pseudomonas syringae pv. syringae (strain B728a).